The primary structure comprises 91 residues: uncharacterized protein (91 aa).

The segment at 71 to 91 (NRENNSRSSVKQIINQETEEE) is disordered. Over residues 76–91 (SRSSVKQIINQETEEE) the composition is skewed to polar residues.

This is an uncharacterized protein from Bacillus subtilis (strain 168).